Here is a 240-residue protein sequence, read N- to C-terminus: UDP-2,3-diacylglucosamine hydrolase (240 aa).

Residues Asp-8, His-10, Asp-41, Asn-78, and His-113 each contribute to the Mn(2+) site. 78-79 (NR) is a binding site for substrate. Substrate contacts are provided by Asp-121, Ser-159, Asn-163, Lys-166, and His-194. Positions 194 and 196 each coordinate Mn(2+).

It belongs to the LpxH family. The cofactor is Mn(2+).

Its subcellular location is the cell inner membrane. It catalyses the reaction UDP-2-N,3-O-bis[(3R)-3-hydroxytetradecanoyl]-alpha-D-glucosamine + H2O = 2-N,3-O-bis[(3R)-3-hydroxytetradecanoyl]-alpha-D-glucosaminyl 1-phosphate + UMP + 2 H(+). It functions in the pathway glycolipid biosynthesis; lipid IV(A) biosynthesis; lipid IV(A) from (3R)-3-hydroxytetradecanoyl-[acyl-carrier-protein] and UDP-N-acetyl-alpha-D-glucosamine: step 4/6. Hydrolyzes the pyrophosphate bond of UDP-2,3-diacylglucosamine to yield 2,3-diacylglucosamine 1-phosphate (lipid X) and UMP by catalyzing the attack of water at the alpha-P atom. Involved in the biosynthesis of lipid A, a phosphorylated glycolipid that anchors the lipopolysaccharide to the outer membrane of the cell. The protein is UDP-2,3-diacylglucosamine hydrolase of Shewanella baltica (strain OS195).